The sequence spans 194 residues: Leucyl/phenylalanyl-tRNA--protein transferase (194 aa).

The protein belongs to the L/F-transferase family.

The protein localises to the cytoplasm. The enzyme catalyses N-terminal L-lysyl-[protein] + L-leucyl-tRNA(Leu) = N-terminal L-leucyl-L-lysyl-[protein] + tRNA(Leu) + H(+). It carries out the reaction N-terminal L-arginyl-[protein] + L-leucyl-tRNA(Leu) = N-terminal L-leucyl-L-arginyl-[protein] + tRNA(Leu) + H(+). The catalysed reaction is L-phenylalanyl-tRNA(Phe) + an N-terminal L-alpha-aminoacyl-[protein] = an N-terminal L-phenylalanyl-L-alpha-aminoacyl-[protein] + tRNA(Phe). Its function is as follows. Functions in the N-end rule pathway of protein degradation where it conjugates Leu, Phe and, less efficiently, Met from aminoacyl-tRNAs to the N-termini of proteins containing an N-terminal arginine or lysine. This Pelodictyon phaeoclathratiforme (strain DSM 5477 / BU-1) protein is Leucyl/phenylalanyl-tRNA--protein transferase.